Here is a 671-residue protein sequence, read N- to C-terminus: Sodium, potassium, lithium and rubidium/H(+) antiporter (671 aa).

A run of 11 helical transmembrane segments spans residues 7–29 (VLVL…FIPV), 46–66 (GLHI…PLLF), 83–103 (PILL…GYTI), 110–130 (IPLP…VVAV), 156–176 (ASGL…AFSI), 182–202 (SFVL…FFII), 228–248 (FVIY…VVAG), 276–296 (IILF…IPDV), 315–335 (ILII…LFWA), 364–384 (GAVT…GSPF), and 389–409 (LIIF…SVLL).

This sequence belongs to the monovalent cation:proton antiporter 1 (CPA1) transporter (TC 2.A.36) family. Nhak (TC 2.A.36.3.2) subfamily.

The protein resides in the cell membrane. Its function is as follows. Transporter involved in the efflux of sodium, potassium, lithium and rubidium. This Bacillus pumilus (strain SAFR-032) protein is Sodium, potassium, lithium and rubidium/H(+) antiporter (nhaK).